The following is a 125-amino-acid chain: Small ribosomal subunit protein uS13 (125 aa).

Residues 92–125 (RRSLPVRGQRTQTNARTRKGKRKTVAGKKKATKK) are disordered. Residues 107–125 (RTRKGKRKTVAGKKKATKK) are compositionally biased toward basic residues.

Belongs to the universal ribosomal protein uS13 family. As to quaternary structure, part of the 30S ribosomal subunit. Forms a loose heterodimer with protein S19. Forms two bridges to the 50S subunit in the 70S ribosome.

Located at the top of the head of the 30S subunit, it contacts several helices of the 16S rRNA. In the 70S ribosome it contacts the 23S rRNA (bridge B1a) and protein L5 of the 50S subunit (bridge B1b), connecting the 2 subunits; these bridges are implicated in subunit movement. Contacts the tRNAs in the A and P-sites. In Chlorobium phaeobacteroides (strain DSM 266 / SMG 266 / 2430), this protein is Small ribosomal subunit protein uS13.